The primary structure comprises 457 residues: Chromosomal replication initiator protein DnaA (457 aa).

The segment at 1–77 (MDTNNNIEKE…EILSQNKVGM (77 aa)) is domain I, interacts with DnaA modulators. The tract at residues 77-108 (MHLAHSVDVRIEVAPKIQVNAQSNINYKATKT) is domain II. Residues 109–323 (SVKDSYTFEN…GAIIKISVNA (215 aa)) form a domain III, AAA+ region region. 4 residues coordinate ATP: glycine 153, glycine 155, lysine 156, and threonine 157. Residues 324 to 457 (NLMNATIDLN…DKKTAFNSSE (134 aa)) form a domain IV, binds dsDNA region.

It belongs to the DnaA family. As to quaternary structure, oligomerizes as a right-handed, spiral filament on DNA at oriC.

It localises to the cytoplasm. Plays an essential role in the initiation and regulation of chromosomal replication. ATP-DnaA binds to the origin of replication (oriC) to initiate formation of the DNA replication initiation complex once per cell cycle. Binds the DnaA box (a 9 base pair repeat at the origin) and separates the double-stranded (ds)DNA. Forms a right-handed helical filament on oriC DNA; dsDNA binds to the exterior of the filament while single-stranded (ss)DNA is stabiized in the filament's interior. The ATP-DnaA-oriC complex binds and stabilizes one strand of the AT-rich DNA unwinding element (DUE), permitting loading of DNA polymerase. After initiation quickly degrades to an ADP-DnaA complex that is not apt for DNA replication. Binds acidic phospholipids. This chain is Chromosomal replication initiator protein DnaA, found in Helicobacter pylori (strain J99 / ATCC 700824) (Campylobacter pylori J99).